Consider the following 389-residue polypeptide: S-adenosylmethionine synthase (389 aa).

His17 is a binding site for ATP. Residue Asp19 coordinates Mg(2+). Glu45 is a K(+) binding site. Positions 58 and 101 each coordinate L-methionine. The tract at residues 101–111 (QSPDIGQGVDV) is flexible loop. Residues 160–162 (DGK), 226–227 (RF), Asp235, 241–242 (RK), Ala258, and Lys262 contribute to the ATP site. Asp235 serves as a coordination point for L-methionine. Position 266 (Lys266) interacts with L-methionine.

This sequence belongs to the AdoMet synthase family. As to quaternary structure, homotetramer; dimer of dimers. Mg(2+) is required as a cofactor. Requires K(+) as cofactor.

The protein localises to the cytoplasm. The catalysed reaction is L-methionine + ATP + H2O = S-adenosyl-L-methionine + phosphate + diphosphate. The protein operates within amino-acid biosynthesis; S-adenosyl-L-methionine biosynthesis; S-adenosyl-L-methionine from L-methionine: step 1/1. In terms of biological role, catalyzes the formation of S-adenosylmethionine (AdoMet) from methionine and ATP. The overall synthetic reaction is composed of two sequential steps, AdoMet formation and the subsequent tripolyphosphate hydrolysis which occurs prior to release of AdoMet from the enzyme. In Anaeromyxobacter sp. (strain Fw109-5), this protein is S-adenosylmethionine synthase.